The chain runs to 727 residues: MKSPKPPNLSDKSLKPNFFHGHRKPSQNRPTVYGGLFSNRQSIPRVSPQPQSNSLAHRTPFDLRKWDPETHLPPPSPPSHSTVISAASERLSPIARFVLDAFRKNRNHWGPSVVSELNKLRRVTPSIVAEVLKLGNDAAVAAKFFHWAGKQKGYKHDFAAYNAFAYCLNRNGHFRAADQLPELMDSQGRPPSEKQFEILIRMHADNRRGLRVYYVYEKMKKFGFKPRVFLYNRIMDALVKNGYFDLALAVYEDFKEDGLVEESTTFMILVKGLCKAGRIEEMLEILQRMRENLCKPDVFAYTAMIKTLVSEGNLDASLRVWDEMRRDEIKPDVMAYGTLVVGLCKDGRVERGYELFMEMKGKQILIDREIYRVLIEGFVADGKVRSACNLWEDLVDSGYIADIGIYNAVIKGLCSVNQVDKAYKLFQVAIEEELEPDFETLSPIMVAYVVMNRLSDFSNVLERIGELGYPVSDYLTQFFKLLCADEEKNAMALDVFYILKTKGHGSVSVYNILMEALYKMGDIQKSLSLFYEMRKLGFEPDSSSYSIAICCFVEKGDVKAACSFHEKIIEMSCVPSIAAYLSLTKGLCQIGEIDAVMLLVRECLGNVESGPMEFKYALTVCHVCKGSNAEKVMKVVDEMNQEGVFINEVIYCAIISGMSKHGTIKVAREVFTELKKRKVMTEADMVVYEEMLIEQTKKKTADLVLSGIKFFGLESKLRAKGCRLLDN.

A disordered region spans residues 1–84 (MKSPKPPNLS…PSPPSHSTVI (84 aa)). The segment covering 38–56 (SNRQSIPRVSPQPQSNSLA) has biased composition (polar residues). Basic and acidic residues predominate over residues 59-70 (TPFDLRKWDPET). PPR repeat units follow at residues 157–191 (DFAA…GRPP), 192–226 (SEKQ…GFKP), 227–261 (RVFL…GLVE), 262–296 (ESTT…LCKP), 297–331 (DVFA…EIKP), 332–366 (DVMA…QILI), 367–401 (DREI…GYIA), 402–436 (DIGI…ELEP), 437–471 (DFET…GYPV), 506–540 (SVSV…GFEP), 541–575 (DSSS…SCVP), 576–606 (SIAA…CLGN), 612–646 (MEFK…GVFI), and 647–681 (NEVI…KVMT).

Belongs to the PPR family. P subfamily.

This Arabidopsis thaliana (Mouse-ear cress) protein is Pentatricopeptide repeat-containing protein At4g20740.